The sequence spans 254 residues: Probable phosphatase Sbal_1472 (254 aa).

The Zn(2+) site is built by H8, H10, H16, H41, E74, H102, H132, D193, and H195.

This sequence belongs to the PHP family. Zn(2+) serves as cofactor.

The sequence is that of Probable phosphatase Sbal_1472 from Shewanella baltica (strain OS155 / ATCC BAA-1091).